Here is an 840-residue protein sequence, read N- to C-terminus: Phosphatidylinositol-glycan-specific phospholipase D (840 aa).

Residues 1-23 form the signal peptide; sequence MSAFRLWPGLLIMLGSLCHRGSP. N-linked (GlcNAc...) asparagine glycosylation is found at asparagine 94, asparagine 271, asparagine 292, asparagine 307, and asparagine 321. FG-GAP repeat units follow at residues 367–428, 436–497, 499–559, 563–623, 633–693, 704–770, and 788–840; these read SPLA…GLPP, EAHR…GGMS, SPNI…LSDK, NVEA…SLGR, QSWF…GATR, LLLS…TLGD, and QYVL…LGSD. 5 N-linked (GlcNAc...) asparagine glycosylation sites follow: asparagine 501, asparagine 568, asparagine 591, asparagine 604, and asparagine 659.

This sequence belongs to the GPLD1 family. Monomer.

The protein resides in the secreted. The catalysed reaction is a 6-(alpha-D-glucosaminyl)-1-(1,2-diacyl-sn-glycero-3-phospho)-1D-myo-inositol + H2O = 6-(alpha-D-glucosaminyl)-1D-myo-inositol + a 1,2-diacyl-sn-glycero-3-phosphate + H(+). Functionally, this protein hydrolyzes the inositol phosphate linkage in proteins anchored by phosphatidylinositol glycans (GPI-anchor) thus releasing these proteins from the membrane. The chain is Phosphatidylinositol-glycan-specific phospholipase D (GPLD1) from Homo sapiens (Human).